We begin with the raw amino-acid sequence, 816 residues long: Probable disease resistance protein At4g33300 (816 aa).

The 149-residue stretch at 1 to 149 (MAITDFFAGE…SLDRVIQQVG (149 aa)) folds into the RPW8 domain. The stretch at 95-111 (TLARKMEKLEKTISNFL) forms a coiled coil. The region spanning 191 to 443 (VKKMMFESQG…LDVLINIWIE (253 aa)) is the NB-ARC domain. 207-214 (GMGGVGKT) provides a ligand contact to ATP. The stretch at 399-415 (SRLLRQMEASLDNLDQT) forms a coiled coil. 4 LRR repeats span residues 681–704 (SLSCLSITNCPRLGELPKNLSKLQ), 705–727 (ALEILRLYACPELKTLPGEICEL), 729–751 (GLKYLDISQCVSLSCLPEEIGKL), and 753–774 (KLEKIDMRECCFSDRPSSAVSL).

Belongs to the disease resistance NB-LRR family.

Probable disease resistance protein. In Arabidopsis thaliana (Mouse-ear cress), this protein is Probable disease resistance protein At4g33300.